The sequence spans 237 residues: Uridylate kinase (237 aa).

Lys-12–Gly-15 serves as a coordination point for ATP. The interval Gly-20–Gly-25 is involved in allosteric activation by GTP. Gly-54 provides a ligand contact to UMP. ATP is bound by residues Gly-55 and Arg-59. UMP is bound by residues Asp-74 and Thr-135–Thr-142. ATP contacts are provided by Thr-162, Tyr-168, and Asp-171.

The protein belongs to the UMP kinase family. As to quaternary structure, homohexamer.

The protein localises to the cytoplasm. The enzyme catalyses UMP + ATP = UDP + ADP. It participates in pyrimidine metabolism; CTP biosynthesis via de novo pathway; UDP from UMP (UMPK route): step 1/1. Allosterically activated by GTP. Inhibited by UTP. Functionally, catalyzes the reversible phosphorylation of UMP to UDP. The sequence is that of Uridylate kinase (pyrH) from Haemophilus influenzae (strain ATCC 51907 / DSM 11121 / KW20 / Rd).